The primary structure comprises 342 residues: Uroporphyrinogen decarboxylase (342 aa).

Substrate is bound by residues 24–28 (RQAGR), Asp74, Tyr151, Ser206, and His322.

Belongs to the uroporphyrinogen decarboxylase family. Homodimer.

It localises to the cytoplasm. It catalyses the reaction uroporphyrinogen III + 4 H(+) = coproporphyrinogen III + 4 CO2. Its pathway is porphyrin-containing compound metabolism; protoporphyrin-IX biosynthesis; coproporphyrinogen-III from 5-aminolevulinate: step 4/4. Its function is as follows. Catalyzes the decarboxylation of four acetate groups of uroporphyrinogen-III to yield coproporphyrinogen-III. This is Uroporphyrinogen decarboxylase from Paracoccus denitrificans (strain Pd 1222).